The sequence spans 348 residues: Protein pelota homolog (348 aa).

It belongs to the eukaryotic release factor 1 family. Pelota subfamily. As to quaternary structure, monomer. A divalent metal cation serves as cofactor.

The protein localises to the cytoplasm. May function in recognizing stalled ribosomes, interact with stem-loop structures in stalled mRNA molecules, and effect endonucleolytic cleavage of the mRNA. May play a role in the release non-functional ribosomes and degradation of damaged mRNAs. Has endoribonuclease activity. In Methanococcus maripaludis (strain C7 / ATCC BAA-1331), this protein is Protein pelota homolog.